We begin with the raw amino-acid sequence, 394 residues long: Obg-like ATPase 1 (394 aa).

The OBG-type G domain occupies 25 to 282; sequence LKIGIVGLPN…MPPDEAAKYC (258 aa). Residues 34–39, 56–60, and 94–97 each bind ATP; these read NVGKST, FCTID, and DIAG. Residues S38 and T58 each contribute to the Mg(2+) site. Residue F129 coordinates GTP. ATP contacts are provided by residues 230–231, M231, and 263–265; these read NM and SCA. 263–265 contacts GTP; the sequence is SCA. Residues 303 to 386 enclose the TGS domain; sequence HLIYFFTAGP…QDADIIFFKF (84 aa).

It belongs to the TRAFAC class OBG-HflX-like GTPase superfamily. OBG GTPase family. YchF/OLA1 subfamily. As to quaternary structure, monomer (Potential). Interacts with GAP1. The cofactor is Mg(2+).

Its subcellular location is the cytoplasm. The protein resides in the cell membrane. It localises to the cytosol. Its activity is regulated as follows. Activated by GAP1. Its function is as follows. Hydrolyzes ATP, and can also hydrolyze GTP with lower efficiency. Has lower affinity for GTP (Potential). Exhibits GTPase activity. Exhibits similar binding affinities and hydrolytic activities toward both GTP and ATP. Binds to the 26 S ribosomal RNA in vitro, but not to the 5.8 S or 18 S rRNA. Confers sensitivity to salinity stress by suppressing the anti-oxidation enzymatic activities and increasing lipid peroxidation thus leading to the accumulation of reactive oxygen species (ROS). The sequence is that of Obg-like ATPase 1 from Oryza sativa subsp. indica (Rice).